Reading from the N-terminus, the 405-residue chain is Type II secretion system protein F (405 aa).

The Cytoplasmic segment spans residues 1 to 168 (MAAFEYLALD…QRQQSRQKIQ (168 aa)). Positions 97, 151, and 155 each coordinate Ca(2+). Residues 169–189 (LALLYPVILMVASLAIVGFLL) traverse the membrane as a helical segment. Residues 190 to 219 (GYVVPDVVRVFIDSGQTLPLLTRVLIGVSD) are Periplasmic-facing. The helical transmembrane segment at 220 to 239 (WVKAWGALAFVAAIGGVIGF) threads the bilayer. The Cytoplasmic segment spans residues 240 to 376 (RYALRKDAFR…IGLMVGLFEP (137 aa)). Residues 377-397 (FMLIFMGAVVLVIVLAILLPI) traverse the membrane as a helical segment. Topologically, residues 398–405 (LSLNQLVG) are periplasmic.

Belongs to the GSP F family. As to quaternary structure, type II secretion system is composed of four main components: the outer membrane complex, the inner membrane complex, the cytoplasmic secretion ATPase and the periplasm-spanning pseudopilus. Homodimer. Interacts with XcpR/GspE and XcpY/GspL components.

Its subcellular location is the cell inner membrane. Functionally, component of the type II secretion system inner membrane complex required for the energy-dependent secretion of extracellular factors such as proteases and toxins from the periplasm. The protein is Type II secretion system protein F (xcpS) of Pseudomonas aeruginosa (strain ATCC 15692 / DSM 22644 / CIP 104116 / JCM 14847 / LMG 12228 / 1C / PRS 101 / PAO1).